The primary structure comprises 126 residues: Large ribosomal subunit protein mL55 (126 aa).

The N-terminal 34 residues, 1 to 34 (MSAKGSLLRLLWQCGMTRAAPESCRYLYTSSWRA), are a transit peptide targeting the mitochondrion. Residue S86 is modified to Phosphoserine.

It belongs to the mitochondrion-specific ribosomal protein mL55 family. As to quaternary structure, component of the mitochondrial ribosome large subunit (39S) which comprises a 16S rRNA and about 50 distinct proteins.

The protein localises to the mitochondrion. The chain is Large ribosomal subunit protein mL55 (MRPL55) from Bos taurus (Bovine).